A 444-amino-acid polypeptide reads, in one-letter code: Phosphoglucosamine mutase (444 aa).

Ser102 (phosphoserine intermediate) is an active-site residue. Residues Ser102, Asp241, Asp243, and Asp245 each contribute to the Mg(2+) site. The residue at position 102 (Ser102) is a Phosphoserine.

This sequence belongs to the phosphohexose mutase family. Mg(2+) serves as cofactor. In terms of processing, activated by phosphorylation.

The enzyme catalyses alpha-D-glucosamine 1-phosphate = D-glucosamine 6-phosphate. Catalyzes the conversion of glucosamine-6-phosphate to glucosamine-1-phosphate. The chain is Phosphoglucosamine mutase from Histophilus somni (strain 129Pt) (Haemophilus somnus).